The following is a 347-amino-acid chain: MSKKIKAGIVGATGYTGVELLRLLAAHPDVEVAAVTSRSEAGTAVADYFPSLRGVYGLAFQTPDEAGLEQCDIVFFATPNGIAMKDAPRLIEQGVRVIDLSADFRIRDIPTWEHWYGMTHAAPGLVSQAVYGLSELNREAVAQARLVANPGCYPTCVSLPLVPLLRQCRLKPGMPLIADCKSGVSGAGRKGNVGSLLCEAGDNFKAYGTAGHRHLPEIRQTIAGLQDGIAEGFVFTPHLAPMIRGMHATVYLHLSDGSDPETVLRDYYRDSPFMDILPAGSTPETRSVRGANLCRISIRQAAQSDVWVVLSVIDNLVKGAAGQAVQNMNIMFGLEETHGLGGIPLLP.

The active site involves Cys-152.

The protein belongs to the NAGSA dehydrogenase family. Type 1 subfamily.

The protein localises to the cytoplasm. It carries out the reaction N-acetyl-L-glutamate 5-semialdehyde + phosphate + NADP(+) = N-acetyl-L-glutamyl 5-phosphate + NADPH + H(+). It functions in the pathway amino-acid biosynthesis; L-arginine biosynthesis; N(2)-acetyl-L-ornithine from L-glutamate: step 3/4. In terms of biological role, catalyzes the NADPH-dependent reduction of N-acetyl-5-glutamyl phosphate to yield N-acetyl-L-glutamate 5-semialdehyde. This is N-acetyl-gamma-glutamyl-phosphate reductase from Neisseria gonorrhoeae (strain NCCP11945).